Here is a 122-residue protein sequence, read N- to C-terminus: Large ribosomal subunit protein uL14 (122 aa).

Belongs to the universal ribosomal protein uL14 family. As to quaternary structure, part of the 50S ribosomal subunit. Forms a cluster with proteins L3 and L19. In the 70S ribosome, L14 and L19 interact and together make contacts with the 16S rRNA in bridges B5 and B8.

Functionally, binds to 23S rRNA. Forms part of two intersubunit bridges in the 70S ribosome. This chain is Large ribosomal subunit protein uL14, found in Clavibacter michiganensis subsp. michiganensis (strain NCPPB 382).